Reading from the N-terminus, the 579-residue chain is Probable N-acetylgalactosaminyltransferase 9 (579 aa).

Topologically, residues 1–12 are cytoplasmic; that stretch reads MLRYIIPRKKGT. The helical; Signal-anchor for type II membrane protein transmembrane segment at 13–30 threads the bilayer; it reads FVIAAFLTVAFFCIVAYH. Residues 31 to 579 are Lumenal-facing; the sequence is RNDRRRTKFQ…KWNFIDPAKA (549 aa). The N-linked (GlcNAc...) asparagine glycan is linked to asparagine 67. Cystine bridges form between cysteine 123-cysteine 356, cysteine 347-cysteine 427, cysteine 464-cysteine 483, cysteine 507-cysteine 520, and cysteine 545-cysteine 562. The catalytic subdomain A stretch occupies residues 133–243; sequence LPKTSVIIIF…HGWLEPIVQR (111 aa). Aspartate 174 and arginine 204 together coordinate substrate. Aspartate 227 is a Mn(2+) binding site. Serine 228 is a binding site for substrate. Histidine 229 contributes to the Mn(2+) binding site. Positions 302-364 are catalytic subdomain B; sequence YIRSPTMAGG…PCSHVGHIFR (63 aa). A substrate-binding site is contributed by tryptophan 333. Histidine 361 contributes to the Mn(2+) binding site. Positions 364, 367, and 369 each coordinate substrate. Asparagine 370 carries an N-linked (GlcNAc...) asparagine glycan. Residues 450–574 enclose the Ricin B-type lectin domain; the sequence is AYGALHTVVS…KDEHQKWNFI (125 aa).

The protein belongs to the glycosyltransferase 2 family. GalNAc-T subfamily. Requires Mn(2+) as cofactor.

It is found in the golgi apparatus membrane. It participates in protein modification; protein glycosylation. In terms of biological role, probable glycopeptide transferase involved in O-linked oligosaccharide biosynthesis. Glycopeptide transferases catalyze the transfer of an N-acetyl-D-galactosamine residue to an already glycosylated peptide. In contrast to other members of the family, it does not act as a peptide transferase that transfers GalNAc onto serine or threonine residue on peptides that have been tested. Some peptide transferase activity is however not excluded, considering that its appropriate peptide substrate may remain unidentified. The protein is Probable N-acetylgalactosaminyltransferase 9 (gly-9) of Caenorhabditis elegans.